A 419-amino-acid polypeptide reads, in one-letter code: DNA primase DnaG (419 aa).

In terms of domain architecture, Toprim spans 174–260 (DAIIVVEGRS…EVEDLEKDEV (87 aa)). Mg(2+) is bound by residues Glu-180, Asp-222, and Asp-224. The interval 277 to 314 (HNILSESDSKNSHKKHNGKHNNKHSNNKHQQHETKVKE) is disordered. Over residues 288-305 (SHKKHNGKHNNKHSNNKH) the composition is skewed to basic residues.

It belongs to the archaeal DnaG primase family. As to quaternary structure, forms a ternary complex with MCM helicase and DNA. Component of the archaeal exosome complex. The cofactor is Mg(2+).

It carries out the reaction ssDNA + n NTP = ssDNA/pppN(pN)n-1 hybrid + (n-1) diphosphate.. In terms of biological role, RNA polymerase that catalyzes the synthesis of short RNA molecules used as primers for DNA polymerase during DNA replication. Also part of the exosome, which is a complex involved in RNA degradation. Acts as a poly(A)-binding protein that enhances the interaction between heteromeric, adenine-rich transcripts and the exosome. The protein is DNA primase DnaG of Methanobrevibacter smithii (strain ATCC 35061 / DSM 861 / OCM 144 / PS).